The chain runs to 760 residues: Pentatricopeptide repeat-containing protein At1g20230 (760 aa).

15 PPR repeats span residues 49–79 (DGYI…IPDP), 80–114 (TIYS…GLIP), 115–149 (DSHV…GLDM), 150–180 (DAFV…MSDK), 181–215 (DVVT…GIEA), 216–250 (NIVS…GFCP), 251–285 (DQVT…GLLK), 286–316 (DKCV…FEMM), 317–351 (EAGV…TMEL), 352–386 (NVVS…GVKP), 387–421 (NHVT…HLLD), 422–452 (NVHV…MPTK), 453–487 (NLVC…RLKP), 488–523 (DFIS…GIKP), and 524–554 (RLEH…MPFE). Positions 559-634 (VWGALLNSCR…NPGCSWIQVK (76 aa)) are type E motif. The tract at residues 635 to 665 (NRVYTLLAGDKSHPQIDQITEKMDEISKEMR) is type E(+) motif. Residues 666 to 760 (KSGHRPNLDF…DGICSCGDFW (95 aa)) form a type DYW motif region.

This sequence belongs to the PPR family. PCMP-H subfamily.

The sequence is that of Pentatricopeptide repeat-containing protein At1g20230 (PCMP-H21) from Arabidopsis thaliana (Mouse-ear cress).